Here is a 67-residue protein sequence, read N- to C-terminus: Large ribosomal subunit protein bL31 (67 aa).

This sequence belongs to the bacterial ribosomal protein bL31 family. Type A subfamily. As to quaternary structure, part of the 50S ribosomal subunit.

In terms of biological role, binds the 23S rRNA. The protein is Large ribosomal subunit protein bL31 of Helicobacter acinonychis (strain Sheeba).